The primary structure comprises 448 residues: Probable alpha-galactosidase B (448 aa).

Positions 1-23 (MSRFHLPLAAAVVLVSCLWSANA) are cleaved as a signal peptide. 2 disulfides stabilise this stretch: Cys46-Cys78 and Cys128-Cys158. The active-site Nucleophile is the Asp156. N-linked (GlcNAc...) asparagine glycosylation is found at Asn163 and Asn181. 226–230 (EWGQA) contacts substrate. Asn237 is a glycosylation site (N-linked (GlcNAc...) asparagine). Asp248 acts as the Proton donor in catalysis.

Belongs to the glycosyl hydrolase 27 family.

The protein localises to the secreted. The enzyme catalyses Hydrolysis of terminal, non-reducing alpha-D-galactose residues in alpha-D-galactosides, including galactose oligosaccharides, galactomannans and galactolipids.. Its function is as follows. Hydrolyzes a variety of simple alpha-D-galactoside as well as more complex molecules such as oligosaccharides and polysaccharides. The protein is Probable alpha-galactosidase B (aglB) of Aspergillus clavatus (strain ATCC 1007 / CBS 513.65 / DSM 816 / NCTC 3887 / NRRL 1 / QM 1276 / 107).